We begin with the raw amino-acid sequence, 692 residues long: Glycine--tRNA ligase beta subunit (692 aa).

The protein belongs to the class-II aminoacyl-tRNA synthetase family. In terms of assembly, tetramer of two alpha and two beta subunits.

The protein resides in the cytoplasm. It carries out the reaction tRNA(Gly) + glycine + ATP = glycyl-tRNA(Gly) + AMP + diphosphate. The sequence is that of Glycine--tRNA ligase beta subunit from Pseudoalteromonas atlantica (strain T6c / ATCC BAA-1087).